A 154-amino-acid polypeptide reads, in one-letter code: Protein X (154 aa).

Positions 68–117 (PCALRFTSARCMETTVNAHQILPKVLHKRTLGLPAMSTTDLEAYFKDCVF) are mitochondrial targeting sequence.

This sequence belongs to the orthohepadnavirus protein X family. In terms of assembly, may form homodimer. May interact with host CEBPA, CFLAR, CREB1, DDB1, E4F1, HBXIP, HSPD1/HSP60, NFKBIA, POLR2E and SMAD4. Interacts with host SMC5-SMC6 complex and induces its degradation. Interacts with host TRPC4AP; leading to prevent ubiquitination of TRPC4AP. Interacts with host PLSCR1; this interaction promotes ubiquitination and degradation of HBx and impairs HBx-mediated cell proliferation. In terms of processing, a fraction may be phosphorylated in insect cells and HepG2 cells, a human hepatoblastoma cell line. Phosphorylated in vitro by host protein kinase C or mitogen-activated protein kinase. N-acetylated in insect cells.

Its subcellular location is the host cytoplasm. The protein localises to the host nucleus. It localises to the host mitochondrion. Functionally, multifunctional protein that plays a role in silencing host antiviral defenses and promoting viral transcription. Does not seem to be essential for HBV infection. May be directly involved in development of cirrhosis and liver cancer (hepatocellular carcinoma). Most of cytosolic activities involve modulation of cytosolic calcium. The effect on apoptosis is controversial depending on the cell types in which the studies have been conducted. May induce apoptosis by localizing in mitochondria and causing loss of mitochondrial membrane potential. May also modulate apoptosis by binding host CFLAR, a key regulator of the death-inducing signaling complex (DISC). Promotes viral transcription by using the host E3 ubiquitin ligase DDB1 to target the SMC5-SMC6 complex to proteasomal degradation. This host complex would otherwise bind to viral episomal DNA, and prevents its transcription. Moderately stimulates transcription of many different viral and cellular transcription elements. Promoters and enhancers stimulated by HBx contain DNA binding sites for NF-kappa-B, AP-1, AP-2, c-EBP, ATF/CREB, or the calcium-activated factor NF-AT. This Hepatitis B virus genotype A2 subtype adw2 (strain Rutter 1979) (HBV-A) protein is Protein X.